The sequence spans 593 residues: DNA primase (593 aa).

Residues 38–62 form a CHC2-type zinc finger; sequence CPFHQEKTPSFTVSDSKRFFYCFGC. The Toprim domain maps to 250–332; sequence NRSILVEGYF…EKKISFIRLP (83 aa). Mg(2+)-binding residues include Glu-256, Asp-300, and Asp-302.

This sequence belongs to the DnaG primase family. In terms of assembly, monomer. Interacts with DnaB. The cofactor is Zn(2+). Mg(2+) is required as a cofactor.

It catalyses the reaction ssDNA + n NTP = ssDNA/pppN(pN)n-1 hybrid + (n-1) diphosphate.. Functionally, RNA polymerase that catalyzes the synthesis of short RNA molecules used as primers for DNA polymerase during DNA replication. This Rickettsia typhi (strain ATCC VR-144 / Wilmington) protein is DNA primase.